The sequence spans 145 residues: uncharacterized protein (145 aa).

The interval 95 to 119 (YVDSTSRTPSAKKDMQGLSVSEKQT) is disordered.

This is an uncharacterized protein from Treponema pallidum (strain Nichols).